Here is a 247-residue protein sequence, read N- to C-terminus: Carboxy-S-adenosyl-L-methionine synthase (247 aa).

S-adenosyl-L-methionine contacts are provided by residues Tyr-40, 65 to 67 (GAS), 90 to 91 (DN), 122 to 123 (DI), Asn-137, and Arg-204.

Belongs to the class I-like SAM-binding methyltransferase superfamily. Cx-SAM synthase family. Homodimer.

It catalyses the reaction prephenate + S-adenosyl-L-methionine = carboxy-S-adenosyl-L-methionine + 3-phenylpyruvate + H2O. Catalyzes the conversion of S-adenosyl-L-methionine (SAM) to carboxy-S-adenosyl-L-methionine (Cx-SAM). The protein is Carboxy-S-adenosyl-L-methionine synthase of Pseudomonas putida (strain ATCC 47054 / DSM 6125 / CFBP 8728 / NCIMB 11950 / KT2440).